Reading from the N-terminus, the 251-residue chain is MTEQRLLTPDEFEAALRAKGAFYHIHHPYHIAMHNGEATREQIQGWVANRFYYQTSIPIKDAAIMANCPHPEVRRQWVQRILDHDGYDGSEGGIEAWLRLGEAVGLSRESLLSEERVLPGVRFAVDAYVNFARRACWEEAACSSLTELFAPQIHQARLDSWPQHYTWIEAEGYDYFRSRLNQARRDVEHGLSLALEYCNTMERQQRMLEILQFKLDILWSMLDAMTMAYTLDRAPYHTVTREAVWHKRRLV.

Belongs to the PqqC family.

It catalyses the reaction 6-(2-amino-2-carboxyethyl)-7,8-dioxo-1,2,3,4,7,8-hexahydroquinoline-2,4-dicarboxylate + 3 O2 = pyrroloquinoline quinone + 2 H2O2 + 2 H2O + H(+). Its pathway is cofactor biosynthesis; pyrroloquinoline quinone biosynthesis. Functionally, ring cyclization and eight-electron oxidation of 3a-(2-amino-2-carboxyethyl)-4,5-dioxo-4,5,6,7,8,9-hexahydroquinoline-7,9-dicarboxylic-acid to PQQ. This is Pyrroloquinoline-quinone synthase from Cronobacter sakazakii (strain ATCC BAA-894) (Enterobacter sakazakii).